The sequence spans 178 residues: Large ribosomal subunit protein uL5 (178 aa).

This sequence belongs to the universal ribosomal protein uL5 family. Part of the 50S ribosomal subunit; part of the 5S rRNA/L5/L18/L25 subcomplex. Contacts the 5S rRNA and the P site tRNA. Forms a bridge to the 30S subunit in the 70S ribosome.

Functionally, this is one of the proteins that bind and probably mediate the attachment of the 5S RNA into the large ribosomal subunit, where it forms part of the central protuberance. In the 70S ribosome it contacts protein S13 of the 30S subunit (bridge B1b), connecting the 2 subunits; this bridge is implicated in subunit movement. Contacts the P site tRNA; the 5S rRNA and some of its associated proteins might help stabilize positioning of ribosome-bound tRNAs. The polypeptide is Large ribosomal subunit protein uL5 (Aliivibrio fischeri (strain ATCC 700601 / ES114) (Vibrio fischeri)).